The sequence spans 123 residues: Small ribosomal subunit protein uS13 (123 aa).

The segment at 93–123 (RRNLPVRGQKTKTNARTRKGPKRAIGGKKKK) is disordered.

Belongs to the universal ribosomal protein uS13 family. In terms of assembly, part of the 30S ribosomal subunit. Forms a loose heterodimer with protein S19. Forms two bridges to the 50S subunit in the 70S ribosome.

Functionally, located at the top of the head of the 30S subunit, it contacts several helices of the 16S rRNA. In the 70S ribosome it contacts the 23S rRNA (bridge B1a) and protein L5 of the 50S subunit (bridge B1b), connecting the 2 subunits; these bridges are implicated in subunit movement. Contacts the tRNAs in the A and P-sites. The chain is Small ribosomal subunit protein uS13 from Clostridium botulinum (strain Kyoto / Type A2).